The following is a 617-amino-acid chain: Neurosecretory protein VGF (617 aa).

The signal sequence occupies residues M1–A23. Disordered stretches follow at residues S29–F75, P94–A113, V121–E157, and L169–T192. A compositionally biased stretch (basic and acidic residues) spans A48 to R64. The segment covering N148 to E157 has biased composition (acidic residues). Q180 is subject to Pyrrolidone carboxylic acid. The span at E182–T192 shows a compositional bias: low complexity. Q313 is subject to Pyrrolidone carboxylic acid. The interval D348–E603 is disordered. Over residues E378–E397 the composition is skewed to acidic residues. The segment covering A418–E436 has biased composition (basic and acidic residues). Phosphoserine is present on S423. Acidic residues predominate over residues G437–D452. Over residues P491 to A501 the composition is skewed to pro residues. A compositionally biased stretch (basic and acidic residues) spans H577–E601.

In terms of assembly, interacts with HSPA8 on cell membrane. Interacts with C3AR1. Interacts with C1QBP. In terms of processing, multiple peptides are derived from VGF, with activities in synaptic plasticity, antidepression, penile erection, autonomic activation, and increases in energy expenditure. As to expression, central and peripheral nervous systems, synthesized exclusively in neuronal and neuroendocrine cells. VGF and several of the derived peptides are present in the brain.

The protein localises to the secreted. Its subcellular location is the cytoplasmic vesicle. The protein resides in the secretory vesicle. Its function is as follows. Secreted polyprotein that is packaged and proteolytically processed by prohormone convertases PCSK1 and PCSK2 in a cell-type-specific manner. VGF and peptides derived from its processing play many roles in neurogenesis and neuroplasticity associated with learning, memory, depression and chronic pain. In terms of biological role, plays a role in the control of body fluid homeostasis by regulating vasopressin release. Suppresses presynaptic glutamatergic neurons connected to vasopressin neurons. Functionally, plays a role in the control of body fluid homeostasis by regulating vasopressin release. Activates GABAergic interneurons which are inhibitory neurons of the nervous system and thereby suppresses presynaptic glutamatergic neurons. Also stimulates feeding behavior in an orexin-dependent manner in the hypothalamus. Functions as a positive regulator for the activation of orexin neurons resulting in elevated gastric acid secretion and gastric emptying. Secreted multifunctional neuropeptide that binds to different cell receptors and thereby plays multiple physiological roles including modulation of energy expenditure, pain, response to stress, gastric regulation, glucose homeostasis as well as lipolysis. Activates the G-protein-coupled receptor C3AR1 via a folding-upon-binding mechanism leading to enhanced lipolysis in adipocytes. Interacts with C1QBP receptor in macrophages and microglia causing increased levels of intracellular calcium and hypersensitivity. Its function is as follows. Plays a role in the regulation of memory formation and depression-related behaviors potentially by influencing synaptic plasticity and neurogenesis. Induces acute and transient activation of the NTRK2/TRKB receptor and subsequent CREB phosphorylation. Also induces insulin secretion in insulinoma cells by increasing intracellular calcium mobilization. This Rattus norvegicus (Rat) protein is Neurosecretory protein VGF (Vgf).